The chain runs to 333 residues: Ketol-acid reductoisomerase (NADP(+)) (333 aa).

The 179-residue stretch at Met1–Thr179 folds into the KARI N-terminal Rossmann domain. NADP(+) contacts are provided by residues Tyr22–Gln25, Lys45, Ser48, Ser50, and Asp80–Gln83. His105 is an active-site residue. Position 131 (Gly131) interacts with NADP(+). The KARI C-terminal knotted domain occupies Thr180–Val325. Asp188, Glu192, Glu224, and Glu228 together coordinate Mg(2+). Ser249 contacts substrate.

Belongs to the ketol-acid reductoisomerase family. Requires Mg(2+) as cofactor.

It catalyses the reaction (2R)-2,3-dihydroxy-3-methylbutanoate + NADP(+) = (2S)-2-acetolactate + NADPH + H(+). It carries out the reaction (2R,3R)-2,3-dihydroxy-3-methylpentanoate + NADP(+) = (S)-2-ethyl-2-hydroxy-3-oxobutanoate + NADPH + H(+). The protein operates within amino-acid biosynthesis; L-isoleucine biosynthesis; L-isoleucine from 2-oxobutanoate: step 2/4. It functions in the pathway amino-acid biosynthesis; L-valine biosynthesis; L-valine from pyruvate: step 2/4. Functionally, involved in the biosynthesis of branched-chain amino acids (BCAA). Catalyzes an alkyl-migration followed by a ketol-acid reduction of (S)-2-acetolactate (S2AL) to yield (R)-2,3-dihydroxy-isovalerate. In the isomerase reaction, S2AL is rearranged via a Mg-dependent methyl migration to produce 3-hydroxy-3-methyl-2-ketobutyrate (HMKB). In the reductase reaction, this 2-ketoacid undergoes a metal-dependent reduction by NADPH to yield (R)-2,3-dihydroxy-isovalerate. This chain is Ketol-acid reductoisomerase (NADP(+)), found in Mycobacterium avium.